A 473-amino-acid polypeptide reads, in one-letter code: Protein nucleotidyltransferase YdiU (473 aa).

ATP-binding residues include glycine 79, glycine 81, arginine 82, lysine 102, aspartate 114, glycine 115, arginine 165, and arginine 172. The Proton acceptor role is filled by aspartate 241. 2 residues coordinate Mg(2+): asparagine 242 and aspartate 251. Position 251 (aspartate 251) interacts with ATP.

This sequence belongs to the SELO family. Mg(2+) is required as a cofactor. It depends on Mn(2+) as a cofactor.

It catalyses the reaction L-seryl-[protein] + ATP = 3-O-(5'-adenylyl)-L-seryl-[protein] + diphosphate. It carries out the reaction L-threonyl-[protein] + ATP = 3-O-(5'-adenylyl)-L-threonyl-[protein] + diphosphate. The enzyme catalyses L-tyrosyl-[protein] + ATP = O-(5'-adenylyl)-L-tyrosyl-[protein] + diphosphate. The catalysed reaction is L-histidyl-[protein] + UTP = N(tele)-(5'-uridylyl)-L-histidyl-[protein] + diphosphate. It catalyses the reaction L-seryl-[protein] + UTP = O-(5'-uridylyl)-L-seryl-[protein] + diphosphate. It carries out the reaction L-tyrosyl-[protein] + UTP = O-(5'-uridylyl)-L-tyrosyl-[protein] + diphosphate. Functionally, nucleotidyltransferase involved in the post-translational modification of proteins. It can catalyze the addition of adenosine monophosphate (AMP) or uridine monophosphate (UMP) to a protein, resulting in modifications known as AMPylation and UMPylation. The sequence is that of Protein nucleotidyltransferase YdiU from Marinomonas sp. (strain MWYL1).